The sequence spans 206 residues: dITP/XTP pyrophosphatase (206 aa).

Residue 7-12 participates in substrate binding; sequence SNNAKK. Residue Asp-72 is the Proton acceptor of the active site. Asp-72 contacts Mg(2+). Residues Ser-73, 155-158, Lys-182, and 187-188 contribute to the substrate site; these read FGYD and HR.

Belongs to the HAM1 NTPase family. Homodimer. Mg(2+) serves as cofactor.

The catalysed reaction is XTP + H2O = XMP + diphosphate + H(+). It catalyses the reaction dITP + H2O = dIMP + diphosphate + H(+). The enzyme catalyses ITP + H2O = IMP + diphosphate + H(+). Pyrophosphatase that catalyzes the hydrolysis of nucleoside triphosphates to their monophosphate derivatives, with a high preference for the non-canonical purine nucleotides XTP (xanthosine triphosphate), dITP (deoxyinosine triphosphate) and ITP. Seems to function as a house-cleaning enzyme that removes non-canonical purine nucleotides from the nucleotide pool, thus preventing their incorporation into DNA/RNA and avoiding chromosomal lesions. This Corynebacterium glutamicum (strain R) protein is dITP/XTP pyrophosphatase.